Here is a 481-residue protein sequence, read N- to C-terminus: Cysteine--tRNA ligase (481 aa).

Position 29 (cysteine 29) interacts with Zn(2+). A 'HIGH' region motif is present at residues 31-41; sequence VTVYDHCHIGH. Positions 209, 234, and 238 each coordinate Zn(2+). Residues 266-270 carry the 'KMSKS' region motif; that stretch reads KMSKS. Lysine 269 serves as a coordination point for ATP.

This sequence belongs to the class-I aminoacyl-tRNA synthetase family. As to quaternary structure, monomer. Zn(2+) is required as a cofactor.

It is found in the cytoplasm. It catalyses the reaction tRNA(Cys) + L-cysteine + ATP = L-cysteinyl-tRNA(Cys) + AMP + diphosphate. This is Cysteine--tRNA ligase from Geobacter sulfurreducens (strain ATCC 51573 / DSM 12127 / PCA).